Reading from the N-terminus, the 312-residue chain is Dipeptide transport ATP-binding protein DppF (312 aa).

The 246-residue stretch at 10–255 (IKNLDLTFNK…PIHPYTKSLL (246 aa)) folds into the ABC transporter domain. An ATP-binding site is contributed by 45–52 (GESGSGKT).

It belongs to the ABC transporter superfamily. In terms of assembly, the complex is composed of two ATP-binding proteins (DppD and DppF), two transmembrane proteins (DppB and DppC) and a solute-binding protein (DppA).

It localises to the cell membrane. The catalysed reaction is a dipeptide(out) + ATP + H2O = a dipeptide(in) + ADP + phosphate + H(+). Part of the ABC transporter DppABCDF involved in dipeptide transport. Responsible for energy coupling to the transport system. The sequence is that of Dipeptide transport ATP-binding protein DppF from Lactococcus lactis subsp. cremoris (strain MG1363).